A 500-amino-acid polypeptide reads, in one-letter code: Na(+)/H(+) antiporter NhaB (500 aa).

The next 13 helical transmembrane spans lie at 11 to 31 (HGFL…FLVL), 34 to 54 (LLLA…EFIF), 58 to 78 (MALK…ALLL), 96 to 116 (VILL…LLLF), 121 to 141 (ILLG…LSAF), 145 to 165 (FLDA…FYAV), 205 to 225 (LLMH…VGEP), 241 to 261 (FLLK…LTCV), 311 to 331 (ILII…LMVI), 350 to 370 (FQDA…VAVI), 394 to 414 (MLYL…VATI), 450 to 470 (ATPN…APLI), and 477 to 497 (MVWM…WAVT).

It belongs to the NhaB Na(+)/H(+) (TC 2.A.34) antiporter family.

It is found in the cell inner membrane. It carries out the reaction 2 Na(+)(in) + 3 H(+)(out) = 2 Na(+)(out) + 3 H(+)(in). Its function is as follows. Na(+)/H(+) antiporter that extrudes sodium in exchange for external protons. The protein is Na(+)/H(+) antiporter NhaB of Pseudomonas putida (strain ATCC 700007 / DSM 6899 / JCM 31910 / BCRC 17059 / LMG 24140 / F1).